A 585-amino-acid polypeptide reads, in one-letter code: MLGRTLINKHGFLIHPRRFVHLNDKSLDGTFILPSKKNHMYDVPTNDPSGILNASDIDRINNLPFFDNTSPTKETNTKEGALLSEKLASVKELFGEDPENPSFINYRFPRGLENPYFDIQVNQLKKKRLSVTQLCTTQNWCELRNFYDFYSQNLSNQLLNLKFQVQKGKKIHKSLEDETHPELNQYKSFTHNFLALTKLSMDIDNDMDALLDNWFNSINRLVSLFTKGDGHAREIVCHGFINLEDGKLVEHLLNSDSKTKENVIISGVIDHLTLRNKHNHQVQKGAAHLDTEYQSWGNILTNLLSNLKELKSNNEIVISDIKTRSVPKIPSIESVIESSKLQTMYYKFFFSHLSQDMTQTYHSFLINAKRRGLDVDAPINPTKILTFILTNPLFANDVKNLLYGLPINHSAFDNDAKGSNTFDMAAFNDLLDRGPTSFNVPIEQDEDSSESTKCVSLRDYGHFYTKWKTPLTLKYFAARLSQIYFIVGNLVSNDLMIEYYYHNDNFHNIIFPYDTLKLGTHAHDSAMVWFGGRDMHPIEPTQKNFNTYCKFCDYRHVCSWKNKNELKLIDLGKELKKIILESSMK.

Residues 1–26 (MLGRTLINKHGFLIHPRRFVHLNDKS) constitute a mitochondrion transit peptide. Residues C141, C549, C552, and C558 each contribute to the [4Fe-4S] cluster site.

The protein belongs to the EXO5 family. Monomer. Mg(2+) serves as cofactor. The cofactor is [4Fe-4S] cluster.

It is found in the mitochondrion. Functionally, single strand DNA specific 5' exonuclease involved in mitochondrial DNA replication and recombination. Releases dinucleotides as main products of catalysis. Has the capacity to slide across 5'double-stranded DNA or 5'RNA sequences and resumes cutting two nucleotides downstream of the double-stranded-to-single-stranded junction or RNA-to-DNA junction, respectively. This chain is Exonuclease V, mitochondrial (EXO5), found in Saccharomyces cerevisiae (strain RM11-1a) (Baker's yeast).